A 64-amino-acid chain; its full sequence is Insect toxin OsI1 (64 aa).

Positions Asp1–Gly61 constitute an LCN-type CS-alpha/beta domain. Cystine bridges form between Cys10-Cys60, Cys14-Cys35, Cys21-Cys42, and Cys25-Cys44. Gly61 is modified (glycine amide).

Belongs to the long (4 C-C) scorpion toxin superfamily. Sodium channel inhibitor family. Beta subfamily. As to expression, expressed by the venom gland.

It is found in the secreted. Its function is as follows. Depressant insect beta-toxins cause a transient contraction paralysis followed by a slow flaccid paralysis. They bind voltage-independently at site-4 of sodium channels (Nav) and shift the voltage of activation toward more negative potentials thereby affecting sodium channel activation and promoting spontaneous and repetitive firing. This toxin is active only on insects. The protein is Insect toxin OsI1 of Orthochirus scrobiculosus (Central Asian scorpion).